The sequence spans 154 residues: Myoglobin (154 aa).

In terms of domain architecture, Globin spans 2–148 (GLSDGEWQLV…FRNDMATKYK (147 aa)). Residue S4 is modified to Phosphoserine. H65 is a nitrite binding site. H65 provides a ligand contact to O2. H94 provides a ligand contact to heme b.

The protein belongs to the globin family. In terms of assembly, monomeric.

The protein resides in the cytoplasm. The protein localises to the sarcoplasm. The enzyme catalyses Fe(III)-heme b-[protein] + nitric oxide + H2O = Fe(II)-heme b-[protein] + nitrite + 2 H(+). It catalyses the reaction H2O2 + AH2 = A + 2 H2O. Its function is as follows. Monomeric heme protein which primary function is to store oxygen and facilitate its diffusion within muscle tissues. Reversibly binds oxygen through a pentacoordinated heme iron and enables its timely and efficient release as needed during periods of heightened demand. Depending on the oxidative conditions of tissues and cells, and in addition to its ability to bind oxygen, it also has a nitrite reductase activity whereby it regulates the production of bioactive nitric oxide. Under stress conditions, like hypoxia and anoxia, it also protects cells against reactive oxygen species thanks to its pseudoperoxidase activity. This is Myoglobin (MB) from Tachyglossus aculeatus aculeatus (Southeast Australian short-beaked echidna).